The primary structure comprises 240 residues: Probable septum site-determining protein MinC (240 aa).

The protein belongs to the MinC family. As to quaternary structure, interacts with MinD and FtsZ.

In terms of biological role, cell division inhibitor that blocks the formation of polar Z ring septums. Rapidly oscillates between the poles of the cell to destabilize FtsZ filaments that have formed before they mature into polar Z rings. Prevents FtsZ polymerization. This Buchnera aphidicola subsp. Cinara cedri (strain Cc) protein is Probable septum site-determining protein MinC.